Reading from the N-terminus, the 1231-residue chain is ATP-dependent RNA helicase DHX30 (1231 aa).

Residues 39-65 (PDGLEGARQEDEEEQPPPPGAEEQSTA) are disordered. 2 consecutive DRBM domains span residues 80 to 148 (PKNL…CQLF) and 292 to 359 (PKNL…CQKL). The Helicase ATP-binding domain maps to 488–656 (LSAIEQNPVV…FGGCPVVKVP (169 aa)). 501-508 (GDTGCGKT) serves as a coordination point for ATP. Residues 603–606 (DEVH) carry the DEAH box motif. Residues 697–870 (LITDLVLQID…NLVVQAKIHM (174 aa)) enclose the Helicase C-terminal domain.

It belongs to the DEAD box helicase family. DEAH subfamily.

It localises to the cytoplasm. The protein resides in the mitochondrion. The protein localises to the mitochondrion matrix. It is found in the mitochondrion nucleoid. The enzyme catalyses ATP + H2O = ADP + phosphate + H(+). Functionally, RNA-dependent helicase. Plays an important role in the assembly of the mitochondrial large ribosomal subunit. Required for optimal function of the zinc-finger antiviral protein ZC3HAV1. Associates with mitochondrial DNA. Involved in nervous system development and differentiation through its involvement in the up-regulation of a number of genes which are required for neurogenesis, including GSC, NCAM1, neurogenin, and NEUROD. This is ATP-dependent RNA helicase DHX30 (DHX30) from Gallus gallus (Chicken).